We begin with the raw amino-acid sequence, 209 residues long: Uridine kinase (209 aa).

Residue 12-19 participates in ATP binding; it reads GGSASGKT.

It belongs to the uridine kinase family.

Its subcellular location is the cytoplasm. The enzyme catalyses uridine + ATP = UMP + ADP + H(+). It carries out the reaction cytidine + ATP = CMP + ADP + H(+). Its pathway is pyrimidine metabolism; CTP biosynthesis via salvage pathway; CTP from cytidine: step 1/3. It participates in pyrimidine metabolism; UMP biosynthesis via salvage pathway; UMP from uridine: step 1/1. This chain is Uridine kinase, found in Chloroflexus aggregans (strain MD-66 / DSM 9485).